Consider the following 178-residue polypeptide: Nicotinamide-nucleotide adenylyltransferase (178 aa).

The protein belongs to the archaeal NMN adenylyltransferase family.

It localises to the cytoplasm. It carries out the reaction beta-nicotinamide D-ribonucleotide + ATP + H(+) = diphosphate + NAD(+). The protein operates within cofactor biosynthesis; NAD(+) biosynthesis; NAD(+) from nicotinamide D-ribonucleotide: step 1/1. The sequence is that of Nicotinamide-nucleotide adenylyltransferase from Thermoplasma volcanium (strain ATCC 51530 / DSM 4299 / JCM 9571 / NBRC 15438 / GSS1).